A 175-amino-acid chain; its full sequence is ATP synthase subunit b, chloroplastic (175 aa).

A helical transmembrane segment spans residues 26-44 (VINLAVVIGVVVSFVGDAV).

This sequence belongs to the ATPase B chain family. As to quaternary structure, F-type ATPases have 2 components, F(1) - the catalytic core - and F(0) - the membrane proton channel. F(1) has five subunits: alpha(3), beta(3), gamma(1), delta(1), epsilon(1). F(0) has four main subunits: a(1), b(1), b'(1) and c(10-14). The alpha and beta chains form an alternating ring which encloses part of the gamma chain. F(1) is attached to F(0) by a central stalk formed by the gamma and epsilon chains, while a peripheral stalk is formed by the delta, b and b' chains.

It localises to the plastid. The protein resides in the chloroplast thylakoid membrane. Functionally, f(1)F(0) ATP synthase produces ATP from ADP in the presence of a proton or sodium gradient. F-type ATPases consist of two structural domains, F(1) containing the extramembraneous catalytic core and F(0) containing the membrane proton channel, linked together by a central stalk and a peripheral stalk. During catalysis, ATP synthesis in the catalytic domain of F(1) is coupled via a rotary mechanism of the central stalk subunits to proton translocation. In terms of biological role, component of the F(0) channel, it forms part of the peripheral stalk, linking F(1) to F(0). This is ATP synthase subunit b, chloroplastic from Tupiella akineta (Green alga).